The sequence spans 183 residues: Large ribosomal subunit protein bL17 (183 aa).

Positions 130-150 are enriched in basic and acidic residues; that stretch reads GTKFAKDEKAKAEATEAKAEE. The interval 130-183 is disordered; it reads GTKFAKDEKAKAEATEAKAEETTETTESTEAESTEAPAEEAKAEDTAAEKKDES. Acidic residues predominate over residues 151–162; it reads TTETTESTEAES. Positions 168-183 are enriched in basic and acidic residues; sequence EEAKAEDTAAEKKDES.

This sequence belongs to the bacterial ribosomal protein bL17 family. As to quaternary structure, part of the 50S ribosomal subunit. Contacts protein L32.

The protein is Large ribosomal subunit protein bL17 of Saccharopolyspora erythraea (strain ATCC 11635 / DSM 40517 / JCM 4748 / NBRC 13426 / NCIMB 8594 / NRRL 2338).